Reading from the N-terminus, the 77-residue chain is Acyl carrier protein (77 aa).

In terms of domain architecture, Carrier spans 2 to 77; that stretch reads SDVAERVKKI…DAIDFITANS (76 aa). Residue Ser37 is modified to O-(pantetheine 4'-phosphoryl)serine.

The protein belongs to the acyl carrier protein (ACP) family. 4'-phosphopantetheine is transferred from CoA to a specific serine of apo-ACP by AcpS. This modification is essential for activity because fatty acids are bound in thioester linkage to the sulfhydryl of the prosthetic group.

It is found in the cytoplasm. The protein operates within lipid metabolism; fatty acid biosynthesis. In terms of biological role, carrier of the growing fatty acid chain in fatty acid biosynthesis. The chain is Acyl carrier protein from Paramagnetospirillum magneticum (strain ATCC 700264 / AMB-1) (Magnetospirillum magneticum).